The primary structure comprises 126 residues: Large ribosomal subunit protein bL12 (126 aa).

The protein belongs to the bacterial ribosomal protein bL12 family. In terms of assembly, homodimer. Part of the ribosomal stalk of the 50S ribosomal subunit. Forms a multimeric L10(L12)X complex, where L10 forms an elongated spine to which 2 to 4 L12 dimers bind in a sequential fashion. Binds GTP-bound translation factors.

Functionally, forms part of the ribosomal stalk which helps the ribosome interact with GTP-bound translation factors. Is thus essential for accurate translation. In Rhizobium meliloti (strain 1021) (Ensifer meliloti), this protein is Large ribosomal subunit protein bL12.